A 312-amino-acid polypeptide reads, in one-letter code: Small kinetochore-associated protein (312 aa).

The interval 1–171 (MAAPEAEAQE…PFNKQKPEEE (171 aa)) is disordered. Positions 131–143 (DVTKVTKSRRENG) are enriched in basic and acidic residues. The interaction with SPAG5 stretch occupies residues 156-312 (LRNSYKPFNK…LEEMEQLLEM (157 aa)). Coiled-coil stretches lie at residues 166-210 (QKPE…LEKF) and 246-287 (LLET…QFLE).

Part of an astrin (SPAG5)-kinastrin (SKAP) complex containing KNSTRN, SPAG5, PLK1, DYNLL1 and SGO2A. Interacts with SPAG5. Directly binds to microtubules, although at relatively low affinity. Interacts with CENPE; this interaction greatly favors microtubule-binding. Interacts with DSN1/MIS13; leading to localization to kinetochores. Interacts with MAPRE1/EB1; leading to localization to the microtubule plus ends. Interacts with PRPF19. Interacts with DYNLL1. Interacts with MAP4.

The protein resides in the nucleus. Its subcellular location is the chromosome. It is found in the centromere. The protein localises to the kinetochore. It localises to the cytoplasm. The protein resides in the cytoskeleton. Its subcellular location is the spindle pole. It is found in the microtubule organizing center. Its function is as follows. Essential component of the mitotic spindle required for faithful chromosome segregation and progression into anaphase. Promotes the metaphase-to-anaphase transition and is required for chromosome alignment, normal timing of sister chromatid segregation, and maintenance of spindle pole architecture. The astrin (SPAG5)-kinastrin (SKAP) complex promotes stable microtubule-kinetochore attachments. Required for kinetochore oscillations and dynamics of microtubule plus-ends during live cell mitosis, possibly by forming a link between spindle microtubule plus-ends and mitotic chromosomes to achieve faithful cell division. The protein is Small kinetochore-associated protein (Knstrn) of Mus musculus (Mouse).